The following is a 124-amino-acid chain: Orexigenic neuropeptide QRFP (124 aa).

An N-terminal signal peptide occupies residues 1–17; that stretch reads MRGFRPLLSLLLPLSAC. The propeptide occupies 18–79; sequence FPLLDRRGPT…REHTGFRLGR (62 aa). The interval 63-101 is disordered; sequence REQQASHREHTGFRLGRQDGSSEAAGFLPADSEKASGPL. Position 122 is a phenylalanine amide (F122).

This sequence belongs to the RFamide neuropeptide family. As to quaternary structure, ligand for the G-protein coupled receptor QRFPR/GPR103. In terms of tissue distribution, expressed in the brain with highest levels in the periventricular hypothalamic nucleus and lateral hypothalamic areas. Expressed at moderate levels in the adrenal gland, eye, heart, intestine, liver, lung, kidney, mesenteric lymph node, ovary, placenta, Peyer patches, skin, spleen, stomach, testis, thymus and uterus.

The protein localises to the secreted. Stimulates feeding and grooming behavior, metabolic rate and locomotor activity and increases blood pressure. May have orexigenic activity. May promote aldosterone secretion by the adrenal gland. The chain is Orexigenic neuropeptide QRFP from Mus musculus (Mouse).